An 857-amino-acid polypeptide reads, in one-letter code: Cation/H(+) antiporter 25 (857 aa).

11 helical membrane-spanning segments follow: residues phenylalanine 65–leucine 85, arginine 93–glycine 110, proline 122–leucine 142, tyrosine 161–leucine 181, serine 194–leucine 214, phenylalanine 227–glutamate 247, tyrosine 259–valine 279, phenylalanine 313–valine 333, isoleucine 385–phenylalanine 405, serine 413–isoleucine 435, and valine 447–tyrosine 467. At serine 855 the chain carries Phosphoserine.

Belongs to the monovalent cation:proton antiporter 2 (CPA2) transporter (TC 2.A.37) family. CHX (TC 2.A.37.4) subfamily. In terms of tissue distribution, specifically expressed in pollen.

Its subcellular location is the membrane. Its function is as follows. May operate as a cation/H(+) antiporter. This chain is Cation/H(+) antiporter 25 (CHX25), found in Arabidopsis thaliana (Mouse-ear cress).